The sequence spans 122 residues: Protein TCL1B3 (122 aa).

This sequence belongs to the TCL1 family.

The protein is Protein TCL1B3 (Tcl1b3) of Mus musculus (Mouse).